A 310-amino-acid polypeptide reads, in one-letter code: tRNA uridine(34) hydroxylase (310 aa).

A Rhodanese domain is found at 127 to 225 (KNQNTIVIDT…YLDDIPKEKN (99 aa)). Residue C185 is the Cysteine persulfide intermediate of the active site.

Belongs to the TrhO family.

It carries out the reaction uridine(34) in tRNA + AH2 + O2 = 5-hydroxyuridine(34) in tRNA + A + H2O. Functionally, catalyzes oxygen-dependent 5-hydroxyuridine (ho5U) modification at position 34 in tRNAs. The protein is tRNA uridine(34) hydroxylase of Prochlorococcus marinus (strain MIT 9312).